Reading from the N-terminus, the 392-residue chain is MAEGFCKNFYSNKLDHLEVQIAKKTKILRVLEQKRAELNRRVRFLREEISIVQEPSSNVGVVVEKMGKMQVLVKTNPDGKYLVKVEPGVNYDELKAGVRVALRSDSYDVHRILPTKVDPLVSLMMVEKVPDSTYQMIGGLDEQIKEIREVIELPIKHPELFENLGIAQPKGVLLYGPPGTGKTLLARAVAHHTQCKFIRVSGSELVQKYIGEGSRLVRELFIMAREHAPSIIFMDEIDSIGSTRGDSNKGSDSEVQRTMLELLNQLDGFESHNNIKVIMATNRIDILDPALLRTGRIDRKIEFPPPNESARLEILKIHSRKMNLTKGIDLETIASKMVGCSGAEVKAVCTEAGMYALRERRVHVTQEDFEMAVHKVLKKTGDLNSDLRKLLK.

Residue 176 to 183 (GPPGTGKT) coordinates ATP.

This sequence belongs to the AAA ATPase family. As to quaternary structure, the 26S proteasome consists of a 20S proteasome core and two 19S regulatory subunits. The 20S proteasome core is composed of 28 subunits that are arranged in four stacked rings, resulting in a barrel-shaped structure. The two end rings are each formed by seven alpha subunits, and the two central rings are each formed by seven beta subunits. The catalytic chamber with the active sites is on the inside of the barrel.

Its subcellular location is the cytoplasm. It localises to the nucleus. In terms of biological role, acts as a regulatory subunit of the 26S proteasome which degrades poly-ubiquitinated proteins in the cytoplasm and in the nucleus. It is essential for the regulated turnover of proteins and for the removal of misfolded proteins. The proteasome is a multicatalytic proteinase complex that is characterized by its ability to cleave peptides with Arg, Phe, Tyr, Leu, and Glu adjacent to the leaving group at neutral or slightly basic pH. The polypeptide is 26S proteasome regulatory subunit 8 homolog (RPT6) (Encephalitozoon cuniculi (strain GB-M1) (Microsporidian parasite)).